Here is a 249-residue protein sequence, read N- to C-terminus: Large ribosomal subunit protein uL22m (249 aa).

Residues 1-22 constitute a mitochondrion transit peptide; it reads MKYINQFMKISKGFLVPSSTIG. Positions 70-98 are disordered; that stretch reads ANQKDDSNRQQKEERVKERPRSRISFKKQ. Over residues 72-98 the composition is skewed to basic and acidic residues; it reads QKDDSNRQQKEERVKERPRSRISFKKQ.

It belongs to the universal ribosomal protein uL22 family. In terms of assembly, component of the mitochondrial large ribosomal subunit (mt-LSU). Mature yeast 74S mitochondrial ribosomes consist of a small (37S) and a large (54S) subunit. The 37S small subunit contains a 15S ribosomal RNA (15S mt-rRNA) and at least 32 different proteins. The 54S large subunit contains a 21S rRNA (21S mt-rRNA) and at least 45 different proteins. uL22m forms the wall of the exit tunnel.

It is found in the mitochondrion. Functionally, component of the mitochondrial ribosome (mitoribosome), a dedicated translation machinery responsible for the synthesis of mitochondrial genome-encoded proteins, including at least some of the essential transmembrane subunits of the mitochondrial respiratory chain. The mitoribosomes are attached to the mitochondrial inner membrane and translation products are cotranslationally integrated into the membrane. The chain is Large ribosomal subunit protein uL22m (mrpl22) from Schizosaccharomyces pombe (strain 972 / ATCC 24843) (Fission yeast).